The following is a 278-amino-acid chain: Expansin-B17 (278 aa).

A signal peptide spans 1-26 (MAAASSRSFSLCVLLLLLLLAPPISA). One can recognise an Expansin-like EG45 domain in the interval 66 to 176 (GGACGYGSLV…RRTACKYGGK (111 aa)). Cystine bridges form between Cys69–Cys98, Cys101–Cys171, and Cys106–Cys112. Residues 189–270 (FWLSLLVEFE…NWKPTATYTS (82 aa)) form the Expansin-like CBD domain.

Belongs to the expansin family. Expansin B subfamily.

It is found in the secreted. The protein resides in the cell wall. Its subcellular location is the membrane. Functionally, may cause loosening and extension of plant cell walls by disrupting non-covalent bonding between cellulose microfibrils and matrix glucans. No enzymatic activity has been found. May be required for rapid internodal elongation in deepwater rice during submergence. The chain is Expansin-B17 (EXPB17) from Oryza sativa subsp. japonica (Rice).